We begin with the raw amino-acid sequence, 642 residues long: Chaperone protein HtpG (642 aa).

Residues 1 to 350 are a; substrate-binding; the sequence is MATDTQKETL…SNDLSLNVSR (350 aa). The segment at 351–567 is b; that stretch reads EILQNDHAVD…EYDMGLQMRR (217 aa). The segment at 568-642 is c; it reads LLEQAGQKLP…MNKLIVQLSK (75 aa).

It belongs to the heat shock protein 90 family. In terms of assembly, homodimer.

The protein localises to the cytoplasm. Molecular chaperone. Has ATPase activity. The chain is Chaperone protein HtpG from Marinomonas sp. (strain MWYL1).